A 219-amino-acid polypeptide reads, in one-letter code: Probable lipoprotein YiaD (219 aa).

Residues 1-20 (MKKRVYLIAAVVSGALAVSG) form the signal peptide. Cys21 carries N-palmitoyl cysteine lipidation. The S-diacylglycerol cysteine moiety is linked to residue Cys21. Helical transmembrane passes span 37–55 (IGAGLGSLVGAGIGALSSS) and 62–84 (GALIGAAAGAALGGGVGYYMDVQ). The region spanning 103 to 219 (GDNIILNMPN…RRVEITLSPL (117 aa)) is the OmpA-like domain.

The protein localises to the cell inner membrane. It localises to the cell outer membrane. Functionally, suppresses temperature-sensitive mutations in BamB when overexpressed. In Escherichia coli (strain K12), this protein is Probable lipoprotein YiaD (yiaD).